The primary structure comprises 293 residues: Elongation factor Ts (293 aa).

Residues 79-82 form an involved in Mg(2+) ion dislocation from EF-Tu region; sequence TDFV. Position 149 is a phosphoserine (serine 149).

This sequence belongs to the EF-Ts family.

It localises to the cytoplasm. In terms of biological role, associates with the EF-Tu.GDP complex and induces the exchange of GDP to GTP. It remains bound to the aminoacyl-tRNA.EF-Tu.GTP complex up to the GTP hydrolysis stage on the ribosome. The polypeptide is Elongation factor Ts (tsf) (Bacillus subtilis (strain 168)).